Here is a 448-residue protein sequence, read N- to C-terminus: Trigger factor (448 aa).

A PPIase FKBP-type domain is found at 172–257 (GDRVTVDFVG…MKKVEWPHLP (86 aa)).

Belongs to the FKBP-type PPIase family. Tig subfamily.

Its subcellular location is the cytoplasm. The catalysed reaction is [protein]-peptidylproline (omega=180) = [protein]-peptidylproline (omega=0). Involved in protein export. Acts as a chaperone by maintaining the newly synthesized protein in an open conformation. Functions as a peptidyl-prolyl cis-trans isomerase. This chain is Trigger factor, found in Burkholderia multivorans (strain ATCC 17616 / 249).